The primary structure comprises 401 residues: MRTLWQHCHAATMTEGRYSVIEDAAIVTSAGLIEWIGPRGDVPPVTADRVVDLGGAWVTPGLIDCHTHAVFGGNRSGEFEQRLQGVSYAEIAAQGGGIASTVRATRAASEDALLASARQRVQALMRDGVTTIEIKSGYGLDLENERKMLRVARRLGEELPVTVRSTCLAAHALPPEYTGRADDYIDHICEQMLPALAAEGLVDAVDAFCEHLAFSPAQVERLFIKARGLGLPVKLHAEQLSSLHGSSLAARYQALSADHLEFMTEEDAIAMAKAGTVAVLLPGAFYFLRETQLPPMDALRRHGVKIALASDLNPGTSPGLSLRLMLNMGCTCFRMTPEEALAGVTLHAATALGLGHSHGSLEVGKVADFVAWRIERPADLSYWLGGDLPKRVVRLGHEISN.

Residues histidine 66 and histidine 68 each coordinate Fe(3+). Zn(2+) contacts are provided by histidine 66 and histidine 68. 4-imidazolone-5-propanoate is bound by residues arginine 75, tyrosine 138, and histidine 171. Position 138 (tyrosine 138) interacts with N-formimidoyl-L-glutamate. Residue histidine 236 coordinates Fe(3+). Histidine 236 contributes to the Zn(2+) binding site. 4-imidazolone-5-propanoate is bound at residue glutamine 239. Fe(3+) is bound at residue aspartate 311. A Zn(2+)-binding site is contributed by aspartate 311. N-formimidoyl-L-glutamate contacts are provided by asparagine 313 and glycine 315. 4-imidazolone-5-propanoate is bound at residue threonine 316.

The protein belongs to the metallo-dependent hydrolases superfamily. HutI family. Zn(2+) is required as a cofactor. The cofactor is Fe(3+).

It is found in the cytoplasm. The enzyme catalyses 4-imidazolone-5-propanoate + H2O = N-formimidoyl-L-glutamate. It participates in amino-acid degradation; L-histidine degradation into L-glutamate; N-formimidoyl-L-glutamate from L-histidine: step 3/3. Its function is as follows. Catalyzes the hydrolytic cleavage of the carbon-nitrogen bond in imidazolone-5-propanoate to yield N-formimidoyl-L-glutamate. It is the third step in the universal histidine degradation pathway. This chain is Imidazolonepropionase, found in Pseudomonas entomophila (strain L48).